The sequence spans 98 residues: Putative pterin-4-alpha-carbinolamine dehydratase (98 aa).

This sequence belongs to the pterin-4-alpha-carbinolamine dehydratase family.

It catalyses the reaction (4aS,6R)-4a-hydroxy-L-erythro-5,6,7,8-tetrahydrobiopterin = (6R)-L-erythro-6,7-dihydrobiopterin + H2O. This is Putative pterin-4-alpha-carbinolamine dehydratase from Parasynechococcus marenigrum (strain WH8102).